The primary structure comprises 188 residues: Putative manganese efflux pump MntP (188 aa).

A run of 6 helical transmembrane segments spans residues 3-23 (LSATILLAFGMSMDAFAASIG), 41-61 (LIFGVIETLTPLVGWGLGMLA), 62-82 (SQFVLEWNHWIAFILLVFLGG), 107-129 (LLVTTAFATSLDAMAVGVGLAFL), 143-163 (ATFLMSTLGIMVGRFIGPLLG), and 168-188 (ILGGIVLIGIGSEILWSHFAG).

The protein belongs to the MntP (TC 9.B.29) family.

The protein localises to the cell inner membrane. In terms of biological role, probably functions as a manganese efflux pump. The polypeptide is Putative manganese efflux pump MntP (Klebsiella pneumoniae (strain 342)).